Consider the following 131-residue polypeptide: Insulin-like 3 (131 aa).

The signal sequence occupies residues 1–20; that stretch reads MDPRLPAWALVLLGPALVFA. Disulfide bonds link C34/C116, C46/C129, and C115/C120. Residues 58 to 104 constitute a propeptide, c peptide like; that stretch reads PATGGDRELLQWLERRHLLHGLVADSNLTLGPGLQPLPQTSHHHRHH.

This sequence belongs to the insulin family. In terms of assembly, heterodimer of a B chain and an A chain linked by two disulfide bonds. Expressed in prenatal and postnatal Leydig cells. Found as well in the corpus luteum, trophoblast, fetal membranes and breast.

The protein localises to the secreted. Its function is as follows. Seems to play a role in testicular function. May be a trophic hormone with a role in testicular descent in fetal life. Is a ligand for LGR8 receptor. The protein is Insulin-like 3 (INSL3) of Homo sapiens (Human).